We begin with the raw amino-acid sequence, 752 residues long: Coiled-coil domain-containing protein 157 (752 aa).

Positions 135-154 are enriched in polar residues; the sequence is QQPLPQKGANQRETPTSKPT. Disordered regions lie at residues 135–163 and 316–336; these read QQPL…ARSP and QALK…EQCL. Coiled coils occupy residues 276-544 and 579-615; these read AAEQ…LLVA and DHME…VAQQ. Basic and acidic residues predominate over residues 316 to 329; sequence QALKQEQGARRRQA. Disordered stretches follow at residues 620-707 and 731-752; these read LIPQ…QPSK and RKRL…ERPM. Polar residues predominate over residues 628-648; sequence SPSSKGTQGATPPVQAKSTSP. Residues 671–692 show a composition bias toward pro residues; the sequence is TSPPRQPCTSPPRQPCTSPPRQ. Over residues 693 to 707 the composition is skewed to polar residues; sequence PCTSPSRQPCSQPSK.

The chain is Coiled-coil domain-containing protein 157 (CCDC157) from Homo sapiens (Human).